A 418-amino-acid chain; its full sequence is Histidine--tRNA ligase (418 aa).

This sequence belongs to the class-II aminoacyl-tRNA synthetase family. In terms of assembly, homodimer.

The protein resides in the cytoplasm. The catalysed reaction is tRNA(His) + L-histidine + ATP = L-histidyl-tRNA(His) + AMP + diphosphate + H(+). This chain is Histidine--tRNA ligase, found in Thermoanaerobacter pseudethanolicus (strain ATCC 33223 / 39E) (Clostridium thermohydrosulfuricum).